The primary structure comprises 141 residues: Protein X (141 aa).

A disordered region spans residues 22-52; that stretch reads GPQSSGPPFPRPAAGSAASSASSPSPSDESD. A compositionally biased stretch (low complexity) spans 33-48; that stretch reads PAAGSAASSASSPSPS. The mitochondrial targeting sequence stretch occupies residues 68–113; sequence PCCLVFTCADLRTMDSTVNFVSWHAKRQLGMPSKDLWTPYIKDQLL.

It belongs to the orthohepadnavirus protein X family. In terms of assembly, may form homodimer. May interact with host CEBPA, CFLAR, CREB1, DDB1, E4F1, HBXIP, HSPD1/HSP60, NFKBIA, POLR2E and SMAD4. Interacts with host SMC5-SMC6 complex and induces its degradation. Interacts with host TRPC4AP; leading to prevent ubiquitination of TRPC4AP. Interacts with host PLSCR1; this interaction promotes ubiquitination and degradation of HBx and impairs HBx-mediated cell proliferation. In terms of processing, a fraction may be phosphorylated in insect cells and HepG2 cells, a human hepatoblastoma cell line. Phosphorylated in vitro by host protein kinase C or mitogen-activated protein kinase. N-acetylated in insect cells.

It localises to the host cytoplasm. The protein resides in the host nucleus. Its subcellular location is the host mitochondrion. In terms of biological role, multifunctional protein that plays a role in silencing host antiviral defenses and promoting viral transcription. Does not seem to be essential for HBV infection. May be directly involved in development of cirrhosis and liver cancer (hepatocellular carcinoma). Most of cytosolic activities involve modulation of cytosolic calcium. The effect on apoptosis is controversial depending on the cell types in which the studies have been conducted. May induce apoptosis by localizing in mitochondria and causing loss of mitochondrial membrane potential. May also modulate apoptosis by binding host CFLAR, a key regulator of the death-inducing signaling complex (DISC). Promotes viral transcription by using the host E3 ubiquitin ligase DDB1 to target the SMC5-SMC6 complex to proteasomal degradation. This host complex would otherwise bind to viral episomal DNA, and prevents its transcription. Moderately stimulates transcription of many different viral and cellular transcription elements. Promoters and enhancers stimulated by HBx contain DNA binding sites for NF-kappa-B, AP-1, AP-2, c-EBP, ATF/CREB, or the calcium-activated factor NF-AT. The sequence is that of Protein X from Woodchuck hepatitis B virus (isolate w64/pWS23) (WHV).